The primary structure comprises 140 residues: Oleosin Cor a 13 (140 aa).

A run of 2 helical transmembrane segments spans residues 31 to 51 and 75 to 95; these read GSLL…LTLA and GFLA…WIYR.

Belongs to the oleosin family. As to expression, expressed in seeds.

It is found in the lipid droplet. The protein localises to the membrane. Its function is as follows. May have a structural role to stabilize the lipid body during desiccation of the seed by preventing coalescence of the oil. Probably interacts with both lipid and phospholipid moieties of lipid bodies. May also provide recognition signals for specific lipase anchorage in lipolysis during seedling growth. This chain is Oleosin Cor a 13, found in Corylus avellana (European hazel).